The primary structure comprises 374 residues: Queuine tRNA-ribosyltransferase (374 aa).

D95 functions as the Proton acceptor in the catalytic mechanism. Substrate is bound by residues 95 to 99 (DSGGF), D149, Q191, and G218. The segment at 249-255 (GVGTYRE) is RNA binding. Residue D268 is the Nucleophile of the active site. The interval 273–277 (TRWAR) is RNA binding; important for wobble base 34 recognition. Residues C306, C308, C311, and H337 each contribute to the Zn(2+) site.

This sequence belongs to the queuine tRNA-ribosyltransferase family. In terms of assembly, homodimer. Within each dimer, one monomer is responsible for RNA recognition and catalysis, while the other monomer binds to the replacement base PreQ1. It depends on Zn(2+) as a cofactor.

The enzyme catalyses 7-aminomethyl-7-carbaguanine + guanosine(34) in tRNA = 7-aminomethyl-7-carbaguanosine(34) in tRNA + guanine. Its pathway is tRNA modification; tRNA-queuosine biosynthesis. Functionally, catalyzes the base-exchange of a guanine (G) residue with the queuine precursor 7-aminomethyl-7-deazaguanine (PreQ1) at position 34 (anticodon wobble position) in tRNAs with GU(N) anticodons (tRNA-Asp, -Asn, -His and -Tyr). Catalysis occurs through a double-displacement mechanism. The nucleophile active site attacks the C1' of nucleotide 34 to detach the guanine base from the RNA, forming a covalent enzyme-RNA intermediate. The proton acceptor active site deprotonates the incoming PreQ1, allowing a nucleophilic attack on the C1' of the ribose to form the product. After dissociation, two additional enzymatic reactions on the tRNA convert PreQ1 to queuine (Q), resulting in the hypermodified nucleoside queuosine (7-(((4,5-cis-dihydroxy-2-cyclopenten-1-yl)amino)methyl)-7-deazaguanosine). This Nostoc sp. (strain PCC 7120 / SAG 25.82 / UTEX 2576) protein is Queuine tRNA-ribosyltransferase.